A 343-amino-acid polypeptide reads, in one-letter code: Homeobox protein Hox-D13 (343 aa).

Disordered stretches follow at residues 1 to 28 (MSRA…SSSS) and 78 to 115 (GTSE…PAAA). Over residues 85–115 (SSSSSSSSAVVAARPEAPPAKECPAPTPAAA) the composition is skewed to low complexity. The segment at residues 276–335 (GRKKRVPYTKLQLKELENEYAINKFINKDKRRRISAATNLSERQVTIWFQNRRVKDKKIV) is a DNA-binding region (homeobox).

It belongs to the Abd-B homeobox family.

The protein localises to the nucleus. In terms of biological role, sequence-specific transcription factor that binds gene promoters and activates their transcription. Part of a developmental regulatory system that provides cells with specific positional identities on the anterior-posterior axis. The sequence is that of Homeobox protein Hox-D13 (HOXD13) from Homo sapiens (Human).